The sequence spans 310 residues: Tagatose-6-phosphate kinase (310 aa).

The protein belongs to the carbohydrate kinase PfkB family. LacC subfamily.

It catalyses the reaction D-tagatofuranose 6-phosphate + ATP = D-tagatofuranose 1,6-bisphosphate + ADP + H(+). Its pathway is carbohydrate metabolism; D-tagatose 6-phosphate degradation; D-glyceraldehyde 3-phosphate and glycerone phosphate from D-tagatose 6-phosphate: step 1/2. The sequence is that of Tagatose-6-phosphate kinase from Streptococcus uberis (strain ATCC BAA-854 / 0140J).